The following is a 363-amino-acid chain: GTP-binding protein 1 (363 aa).

Residues 63–287 (ARVAFIGFPS…LKERIWEELN (225 aa)) form the OBG-type G domain. Residues 69-76 (GFPSVGKS), 115-119 (DLPGI), and 246-249 (KIDA) contribute to the GTP site. The 76-residue stretch at 287–362 (NLYRIYTKRK…EEGDVVTIVT (76 aa)) folds into the TGS domain.

The protein belongs to the TRAFAC class OBG-HflX-like GTPase superfamily. OBG GTPase family.

The chain is GTP-binding protein 1 (gtp1) from Schizosaccharomyces pombe (strain 972 / ATCC 24843) (Fission yeast).